A 125-amino-acid polypeptide reads, in one-letter code: uncharacterized protein (125 aa).

A helical transmembrane segment spans residues 10–26 (IIILVCLMFLAIMVYIY).

It localises to the membrane. This is an uncharacterized protein from Rickettsia prowazekii (strain Madrid E).